Consider the following 62-residue polypeptide: Large ribosomal subunit protein eL24 (62 aa).

Residues C6, C9, C32, and C36 each contribute to the Zn(2+) site. The C4-type zinc-finger motif lies at C6–C36.

It belongs to the eukaryotic ribosomal protein eL24 family. Part of the 50S ribosomal subunit. Forms a cluster with proteins L3 and L14. The cofactor is Zn(2+).

Its function is as follows. Binds to the 23S rRNA. This is Large ribosomal subunit protein eL24 from Methanococcus vannielii (strain ATCC 35089 / DSM 1224 / JCM 13029 / OCM 148 / SB).